We begin with the raw amino-acid sequence, 101 residues long: Small ribosomal subunit protein uS14 (101 aa).

Belongs to the universal ribosomal protein uS14 family. In terms of assembly, part of the 30S ribosomal subunit. Contacts proteins S3 and S10.

Functionally, binds 16S rRNA, required for the assembly of 30S particles and may also be responsible for determining the conformation of the 16S rRNA at the A site. The protein is Small ribosomal subunit protein uS14 of Zymomonas mobilis subsp. mobilis (strain ATCC 31821 / ZM4 / CP4).